We begin with the raw amino-acid sequence, 592 residues long: ATP-dependent lipid A-core flippase (592 aa).

A run of 6 helical transmembrane segments spans residues 31-51, 76-96, 134-154, 161-181, 261-281, and 288-308; these read LSSF…EGII, AMLV…TYFL, AVIF…ITLV, LALL…VAVI, VTQF…MVQA, and VGGF…LKHL. In terms of domain architecture, ABC transmembrane type-1 spans 35–317; it reads ILAMVAMGVV…LTDVNQPMQR (283 aa). The region spanning 349–587 is the ABC transporter domain; the sequence is LRFEHVTFRY…DGLYAGLHRI (239 aa). 383–390 lines the ATP pocket; it reads GPSGSGKT.

This sequence belongs to the ABC transporter superfamily. Lipid exporter (TC 3.A.1.106) family. Homodimer.

The protein resides in the cell inner membrane. It catalyses the reaction ATP + H2O + lipid A-core oligosaccharideSide 1 = ADP + phosphate + lipid A-core oligosaccharideSide 2.. Functionally, involved in lipopolysaccharide (LPS) biosynthesis. Translocates lipid A-core from the inner to the outer leaflet of the inner membrane. Transmembrane domains (TMD) form a pore in the inner membrane and the ATP-binding domain (NBD) is responsible for energy generation. The sequence is that of ATP-dependent lipid A-core flippase from Ralstonia nicotianae (strain ATCC BAA-1114 / GMI1000) (Ralstonia solanacearum).